We begin with the raw amino-acid sequence, 473 residues long: MKILYSPRRFYPVETLFNGTLALGGRDQETTGFAWWAGNARLINLSGKLLGAHVAHGGLIVFWAGAMNLFEVAHFVPEKPMYEQGLILLPHLATLGWGVGPGGEVVDIFPYFVSGVLHLISSAVLGFGGIYHAIIGPETLEESFPFFGYAWKDKNKMTTILGIHLILLGAGAFLSVLKALYFGGVYDTWAPGGGDVRKITNLTLNPSVVFGYLLKSPFGGEGWIVSVDNLEDIIGGHVWLGSICIFGGIWHISTKPFAWARRAFVWSGEAYLSYSLGALSVFGFIACCFAWFNNTAYPSEFYGPTGPEASQAQAFTFLVRDQRLGANVGSAQGPTGLGKYLMRSPTGEIIFGGETMRFWDLRAPWLEPLRGPNGLDLSKLKKDIQPWQERRSAEYMTHAPLGSLNSVGGVATEINAVNYVSPRSWLATSHFVSGFFFFVGHLWHAGRARAAAAGFEKGIDRDFEPVLSTTPLN.

A propeptide spanning residues 1–14 (MKILYSPRRFYPVE) is cleaved from the precursor. An N-acetylthreonine modification is found at threonine 15. Phosphothreonine is present on threonine 15. The next 5 helical transmembrane spans lie at 69 to 93 (LFEV…PHLA), 134 to 155 (IIGP…KDKN), 178 to 200 (KALY…RKIT), 255 to 275 (KPFA…LSYS), and 291 to 312 (WFNN…ASQA). Glutamate 367 contributes to the [CaMn4O5] cluster binding site. A helical transmembrane segment spans residues 447-471 (RARAAAAGFEKGIDRDFEPVLSTTP).

Belongs to the PsbB/PsbC family. PsbC subfamily. As to quaternary structure, PSII is composed of 1 copy each of membrane proteins PsbA, PsbB, PsbC, PsbD, PsbE, PsbF, PsbH, PsbI, PsbJ, PsbK, PsbL, PsbM, PsbT, PsbX, PsbY, PsbZ, Psb30/Ycf12, at least 3 peripheral proteins of the oxygen-evolving complex and a large number of cofactors. It forms dimeric complexes. Binds multiple chlorophylls and provides some of the ligands for the Ca-4Mn-5O cluster of the oxygen-evolving complex. It may also provide a ligand for a Cl- that is required for oxygen evolution. PSII binds additional chlorophylls, carotenoids and specific lipids. is required as a cofactor.

It localises to the plastid. The protein resides in the chloroplast thylakoid membrane. Its function is as follows. One of the components of the core complex of photosystem II (PSII). It binds chlorophyll and helps catalyze the primary light-induced photochemical processes of PSII. PSII is a light-driven water:plastoquinone oxidoreductase, using light energy to abstract electrons from H(2)O, generating O(2) and a proton gradient subsequently used for ATP formation. This Huperzia lucidula (Shining clubmoss) protein is Photosystem II CP43 reaction center protein.